The following is a 426-amino-acid chain: D-tagatose-1,6-bisphosphate aldolase subunit KbaZ (426 aa).

Belongs to the GatZ/KbaZ family. KbaZ subfamily. In terms of assembly, forms a complex with KbaY.

Its pathway is carbohydrate metabolism; D-tagatose 6-phosphate degradation; D-glyceraldehyde 3-phosphate and glycerone phosphate from D-tagatose 6-phosphate: step 2/2. Its function is as follows. Component of the tagatose-1,6-bisphosphate aldolase KbaYZ that is required for full activity and stability of the Y subunit. Could have a chaperone-like function for the proper and stable folding of KbaY. When expressed alone, KbaZ does not show any aldolase activity. This chain is D-tagatose-1,6-bisphosphate aldolase subunit KbaZ, found in Escherichia coli O81 (strain ED1a).